We begin with the raw amino-acid sequence, 589 residues long: MGSRRITLLGALFAVLAVAIEGRTLLTHNLKAEAAETVDAVSSVVAGSAGRQLLVSEPHDYNYEKVGFDWTGGVCVNTGTSKQSPINIETDSLAEESERLGTADDTSRLALKGLLSSSYQLTSEVAINLEQDMQFSFNAPDEDLPQLTIGGVVHTFKPVQIHFHHFASEHAIDGQLYPLEAHMVMASQNDGSDQLAVIGIMYKYGEEDPFLKRLQETAQSNGEAGDKNVELNSFSINVARDLLPESDLTYYGYDGSLTTPGCDERVKWHVFKEARTVSVAQLKVFSEVTLAAHPEATVTNNRVIQPLNGRKVYEYKGEPNDKYNYVQHGFDWRDNGLDSCAGDVQSPIDIVTSTLQAGSSRSDVSSVNLMTLNTDAFTLTGNTVNIGQGMQINFGDPPAGDLPVIRIGTRDVTFRPLQVHWHFFLSEHTVDGVHYPLEAHIVMKDNDNLGDSAGQLAVIGIMYKYGDADPFITDMQKRVSDKIASGAITYGQSGVSLNNPDDPFNVNIKNNFLPSELGYAGYDGSLTTPPCSEIVKWHVFLEPRTVSVEQMEVFADVTLNSNPGATVTTNRMIQPLEGRTVYGYNGAAA.

2 Alpha-carbonic anhydrase domains span residues 59–316 (HDYN…YEYK) and 321–585 (DKYN…YGYN). 258–259 (TT) is a substrate binding site. Residues 390-589 (MQINFGDPPA…TVYGYNGAAA (200 aa)) form a catalytic region. Zn(2+) contacts are provided by H420, H422, and H440.

It belongs to the alpha-carbonic anhydrase family. It depends on Zn(2+) as a cofactor.

It carries out the reaction hydrogencarbonate + H(+) = CO2 + H2O. Its function is as follows. Reversible hydration of carbon dioxide. This Dunaliella salina (Green alga) protein is Carbonic anhydrase (DCA).